The following is a 209-amino-acid chain: D-aminoacyl-tRNA deacylase 1 (209 aa).

Mg(2+)-binding residues include Val4, Gln6, and Cys28. The Gly-cisPro motif, important for rejection of L-amino acids signature appears at 139–140; sequence GP. Positions 142-209 are disordered; the sequence is TIELESPAPG…EGDVSSEREP (68 aa). Basic and acidic residues-rich tracts occupy residues 159-170 and 181-194; these read QLSKLEKQQQRK and SSKERNTPRKEDRS. 3 positions are modified to phosphoserine: Ser197, Ser204, and Ser205.

Belongs to the DTD family. As to quaternary structure, homodimer. Interacts with CDC45 and TOPBP1. Post-translationally, preferentially phosphorylated in cells arrested early in S phase. Phosphorylation in the C-terminus weakens the interaction with CDC45. In terms of tissue distribution, expressed in many adult and fetal tissues. Highest levels in testis, ovary, spleen and in adult and fetal brain.

The protein localises to the nucleus. It localises to the cytoplasm. It carries out the reaction glycyl-tRNA(Ala) + H2O = tRNA(Ala) + glycine + H(+). It catalyses the reaction a D-aminoacyl-tRNA + H2O = a tRNA + a D-alpha-amino acid + H(+). Its function is as follows. Possible ATPase involved in DNA replication, may facilitate loading of CDC45 onto pre-replication complexes. An aminoacyl-tRNA editing enzyme that deacylates mischarged D-aminoacyl-tRNAs. Also deacylates mischarged glycyl-tRNA(Ala), protecting cells against glycine mischarging by AlaRS. Acts via tRNA-based rather than protein-based catalysis; rejects L-amino acids rather than detecting D-amino acids in the active site. By recycling D-aminoacyl-tRNA to D-amino acids and free tRNA molecules, this enzyme counteracts the toxicity associated with the formation of D-aminoacyl-tRNA entities in vivo and helps enforce protein L-homochirality. The protein is D-aminoacyl-tRNA deacylase 1 (DTD1) of Homo sapiens (Human).